The primary structure comprises 240 residues: L-isoleucine-4-hydroxylase (240 aa).

The Fe cation site is built by histidine 159, aspartate 161, and histidine 212.

Belongs to the iron/ascorbate-dependent oxidoreductase family. It depends on L-ascorbate as a cofactor. Requires Fe(2+) as cofactor.

The catalysed reaction is L-isoleucine + 2-oxoglutarate + O2 = (4S)-4-hydroxy-L-isoleucine + succinate + CO2. Catalyzes the hydroxylation of L-isoleucine to produce (4S)-4-hydroxy-L-isoleucine. Can also catalyze the hydroxylation of L-leucine, L-norvaline, L-norleucine and L-allo-isoleucine, as well as the sulfoxidation of L-methionine, L-ethionine, S-methyl-L-cysteine, S-ethyl-L-cysteine, and S-allyl-L-cysteine. The protein is L-isoleucine-4-hydroxylase of Bacillus thuringiensis.